Reading from the N-terminus, the 273-residue chain is 4-hydroxy-tetrahydrodipicolinate reductase (273 aa).

Residues 12-17 (GAGGRM) and E38 each bind NAD(+). R39 is a binding site for NADP(+). Residues 102–104 (GTT) and 126–129 (AANF) each bind NAD(+). Residue H159 is the Proton donor/acceptor of the active site. H160 contributes to the (S)-2,3,4,5-tetrahydrodipicolinate binding site. Catalysis depends on K163, which acts as the Proton donor. 169–170 (GT) is a binding site for (S)-2,3,4,5-tetrahydrodipicolinate.

Belongs to the DapB family. Homotetramer.

The protein resides in the cytoplasm. The enzyme catalyses (S)-2,3,4,5-tetrahydrodipicolinate + NAD(+) + H2O = (2S,4S)-4-hydroxy-2,3,4,5-tetrahydrodipicolinate + NADH + H(+). It catalyses the reaction (S)-2,3,4,5-tetrahydrodipicolinate + NADP(+) + H2O = (2S,4S)-4-hydroxy-2,3,4,5-tetrahydrodipicolinate + NADPH + H(+). Its pathway is amino-acid biosynthesis; L-lysine biosynthesis via DAP pathway; (S)-tetrahydrodipicolinate from L-aspartate: step 4/4. Functionally, catalyzes the conversion of 4-hydroxy-tetrahydrodipicolinate (HTPA) to tetrahydrodipicolinate. The protein is 4-hydroxy-tetrahydrodipicolinate reductase of Yersinia pestis bv. Antiqua (strain Antiqua).